A 384-amino-acid chain; its full sequence is Anhydro-N-acetylmuramic acid kinase (384 aa).

17–24 (GTSMDGVD) is a binding site for ATP.

This sequence belongs to the anhydro-N-acetylmuramic acid kinase family.

It catalyses the reaction 1,6-anhydro-N-acetyl-beta-muramate + ATP + H2O = N-acetyl-D-muramate 6-phosphate + ADP + H(+). It participates in amino-sugar metabolism; 1,6-anhydro-N-acetylmuramate degradation. The protein operates within cell wall biogenesis; peptidoglycan recycling. Its function is as follows. Catalyzes the specific phosphorylation of 1,6-anhydro-N-acetylmuramic acid (anhMurNAc) with the simultaneous cleavage of the 1,6-anhydro ring, generating MurNAc-6-P. Is required for the utilization of anhMurNAc either imported from the medium or derived from its own cell wall murein, and thus plays a role in cell wall recycling. In Burkholderia thailandensis (strain ATCC 700388 / DSM 13276 / CCUG 48851 / CIP 106301 / E264), this protein is Anhydro-N-acetylmuramic acid kinase.